Consider the following 361-residue polypeptide: Putative agmatine deiminase (361 aa).

The Amidino-cysteine intermediate role is filled by C354.

It belongs to the agmatine deiminase family.

It catalyses the reaction agmatine + H2O = N-carbamoylputrescine + NH4(+). The chain is Putative agmatine deiminase from Streptococcus pneumoniae (strain Taiwan19F-14).